The chain runs to 149 residues: MKEALHQIVVRCSELVSSTSLPRLSVSRLQGPPDSQPLGTLGQGGWKLLGIVGSLAPETLGGLGTEFGPCTHPLPFDMVRERERDDELRQGWLLQCPQCARTLLCHCGPFLTPPSQTSSSGFQLCSLKPSGSLVTATEPLSNFAFSYFP.

As to expression, expressed in fetus (aged from 7 to 8 weeks). Weakly expressed in lymphocytes.

This is Protein GR6 from Homo sapiens (Human).